The chain runs to 72 residues: Crustacean hyperglycemic hormone (72 aa).

Gln1 bears the Pyrrolidone carboxylic acid mark. Phe3 carries the D-phenylalanine; in form CHH-II modification. Cystine bridges form between Cys7-Cys43, Cys23-Cys39, and Cys26-Cys52. Val72 is subject to Valine amide.

Stereoinversion of L-Phe (in CHH-I) to D-Phe (in CHH-II) the two forms are present in a ratio 3:1 (CHH-I/CHH-II). In terms of tissue distribution, produced by the medulla terminalis X-organ in the eyestalks and transported to the sinus gland where they are stored and released.

The protein localises to the secreted. In terms of biological role, hormone found in the sinus gland of isopods and decapods which controls the blood sugar level. Has a secretagogue action over the amylase released from the midgut gland. May act as a stress hormone and may be involved in the control of molting and reproduction. The protein is Crustacean hyperglycemic hormone of Procambarus bouvieri (Mexican crayfish).